The chain runs to 516 residues: 2,3-bisphosphoglycerate-independent phosphoglycerate mutase (516 aa).

2 residues coordinate Mn(2+): D15 and S65. The Phosphoserine intermediate role is filled by S65. Residues H126, 156–157 (RD), R188, R194, 263–266 (RADR), and K336 each bind substrate. Mn(2+) is bound by residues D403, H407, D444, H445, and H463.

The protein belongs to the BPG-independent phosphoglycerate mutase family. In terms of assembly, monomer. Mn(2+) is required as a cofactor.

It catalyses the reaction (2R)-2-phosphoglycerate = (2R)-3-phosphoglycerate. It participates in carbohydrate degradation; glycolysis; pyruvate from D-glyceraldehyde 3-phosphate: step 3/5. Its function is as follows. Catalyzes the interconversion of 2-phosphoglycerate and 3-phosphoglycerate. This Francisella tularensis subsp. holarctica (strain OSU18) protein is 2,3-bisphosphoglycerate-independent phosphoglycerate mutase.